A 138-amino-acid polypeptide reads, in one-letter code: Putative pre-16S rRNA nuclease (138 aa).

The protein belongs to the YqgF nuclease family.

It localises to the cytoplasm. Could be a nuclease involved in processing of the 5'-end of pre-16S rRNA. The protein is Putative pre-16S rRNA nuclease of Salmonella schwarzengrund (strain CVM19633).